Here is a 109-residue protein sequence, read N- to C-terminus: Flagellar hook-basal body complex protein FliE (109 aa).

Positions 1 to 38 are disordered; the sequence is MQAIHNDKSLLSPFSELNTDNRTKREESGNAFKEQKGG. The segment covering 19-38 has biased composition (basic and acidic residues); it reads TDNRTKREESGNAFKEQKGG.

It belongs to the FliE family.

It localises to the bacterial flagellum basal body. The polypeptide is Flagellar hook-basal body complex protein FliE (Helicobacter pylori (strain G27)).